A 446-amino-acid polypeptide reads, in one-letter code: N-succinylarginine dihydrolase 2 (446 aa).

Residues 20-29 (VGLSPGNLAS), Asn-111, and 138-139 (HR) each bind substrate. Residue Glu-175 is part of the active site. Substrate is bound at residue Arg-212. Residue His-246 is part of the active site. Substrate is bound by residues Asp-248 and Asn-361. Catalysis depends on Cys-367, which acts as the Nucleophile.

The protein belongs to the succinylarginine dihydrolase family. As to quaternary structure, homodimer.

The catalysed reaction is N(2)-succinyl-L-arginine + 2 H2O + 2 H(+) = N(2)-succinyl-L-ornithine + 2 NH4(+) + CO2. It functions in the pathway amino-acid degradation; L-arginine degradation via AST pathway; L-glutamate and succinate from L-arginine: step 2/5. Its function is as follows. Catalyzes the hydrolysis of N(2)-succinylarginine into N(2)-succinylornithine, ammonia and CO(2). This chain is N-succinylarginine dihydrolase 2, found in Caulobacter vibrioides (strain ATCC 19089 / CIP 103742 / CB 15) (Caulobacter crescentus).